The sequence spans 209 residues: MKILIASSHGYKVRETKVFLKKLGEFDIFSLVDYPSYHPPKETGETPEENAIQKGLFAAQTFRCWTIADDSMLIIPALGGLPGKLSASFAGEQANDKDHRKKLLENMRLLENTIDRSAYFECCVALISPFGKIFKAHASCEGTIAFEERGSSGFGYDPLFVKHDYKQTYAELPEAIKNQVSHRAKALVKLQPYVETVLANHLLAGKESL.

7-12 is a binding site for substrate; it reads SSHGYK. The Proton acceptor role is filled by Asp-70. Asp-70 contributes to the Mg(2+) binding site. Substrate is bound by residues Ser-71, 154 to 157, Lys-177, and 182 to 183; these read FGYD and HR.

The protein belongs to the HAM1 NTPase family. In terms of assembly, homodimer. Mg(2+) is required as a cofactor.

The catalysed reaction is XTP + H2O = XMP + diphosphate + H(+). It catalyses the reaction dITP + H2O = dIMP + diphosphate + H(+). It carries out the reaction ITP + H2O = IMP + diphosphate + H(+). Pyrophosphatase that catalyzes the hydrolysis of nucleoside triphosphates to their monophosphate derivatives, with a high preference for the non-canonical purine nucleotides XTP (xanthosine triphosphate), dITP (deoxyinosine triphosphate) and ITP. Seems to function as a house-cleaning enzyme that removes non-canonical purine nucleotides from the nucleotide pool, thus preventing their incorporation into DNA/RNA and avoiding chromosomal lesions. The protein is dITP/XTP pyrophosphatase of Chlamydia trachomatis serovar A (strain ATCC VR-571B / DSM 19440 / HAR-13).